The sequence spans 156 residues: 3-dehydroquinate dehydratase (156 aa).

The Proton acceptor role is filled by Tyr22. Positions 73, 79, and 86 each coordinate substrate. The active-site Proton donor is the His99. Substrate is bound by residues 100 to 101 (LS) and Arg110.

This sequence belongs to the type-II 3-dehydroquinase family. In terms of assembly, homododecamer.

It catalyses the reaction 3-dehydroquinate = 3-dehydroshikimate + H2O. Its pathway is metabolic intermediate biosynthesis; chorismate biosynthesis; chorismate from D-erythrose 4-phosphate and phosphoenolpyruvate: step 3/7. Its function is as follows. Catalyzes a trans-dehydration via an enolate intermediate. The polypeptide is 3-dehydroquinate dehydratase (Nitratiruptor sp. (strain SB155-2)).